The sequence spans 113 residues: UPF0122 protein LCA_0713 (113 aa).

It belongs to the UPF0122 family.

Might take part in the signal recognition particle (SRP) pathway. This is inferred from the conservation of its genetic proximity to ftsY/ffh. May be a regulatory protein. This is UPF0122 protein LCA_0713 from Latilactobacillus sakei subsp. sakei (strain 23K) (Lactobacillus sakei subsp. sakei).